Here is a 298-residue protein sequence, read N- to C-terminus: Diphthine methyl ester synthase (298 aa).

S-adenosyl-L-methionine contacts are provided by residues Leu-9, Asp-85, Gly-88, 113–114, Leu-164, Leu-222, and His-247; that span reads SV.

This sequence belongs to the diphthine synthase family.

The protein resides in the cytoplasm. The catalysed reaction is 2-[(3S)-amino-3-carboxypropyl]-L-histidyl-[translation elongation factor 2] + 4 S-adenosyl-L-methionine = diphthine methyl ester-[translation elongation factor 2] + 4 S-adenosyl-L-homocysteine + 3 H(+). It participates in protein modification; peptidyl-diphthamide biosynthesis. In terms of biological role, S-adenosyl-L-methionine-dependent methyltransferase that catalyzes four methylations of the modified target histidine residue in translation elongation factor 2 (EF-2), to form an intermediate called diphthine methyl ester. The four successive methylation reactions represent the second step of diphthamide biosynthesis. The sequence is that of Diphthine methyl ester synthase (DPH5) from Eremothecium gossypii (strain ATCC 10895 / CBS 109.51 / FGSC 9923 / NRRL Y-1056) (Yeast).